A 264-amino-acid chain; its full sequence is Regulatory protein RecX (264 aa).

The protein belongs to the RecX family.

It localises to the cytoplasm. Functionally, negatively modulates RecA activity. The sequence is that of Regulatory protein RecX from Bacillus subtilis (strain 168).